The primary structure comprises 453 residues: MKRGIYAVLLVGVLIFSVVASGCIGGTQTQTETQTPEKTQTPTTTQPSPTTTTSPTQTTSQTPTETETHTQEAECGSGKVVIWHNMQPNELQVFQSLAEEYMAMCPDVEIVFEQKPDLENALKVAIPAGQGPDLFIWAHDWIGKFAEAGLLEPIDEYITDDLLQKFAPMAREAIEYKGHYYALPFAAETVAMIYNKKIVSEPPKTFDELKEVMEKYYDPNNEKYGIAWPINAYFISAIAQAFGGYYFDDKTEQPGLDKPETIEGFKFFFENIWPYMAPTADYNTQQSIFLEGRAPIMVNGPWSIGSVKDAGIDFGVAPLPPIIKDGKEYWPRPYGGVKLIYFAAGTHNKDAAWKFVKWFTTNPEVIKQLALDLGYIPVLSEVLNDPEIKNDPVIYGFGQAVQHAYLMPKSPKMGAVWGGVQGAIDEILKDPKHADIEAILKKYQEEILKNMQG.

Residues 1 to 29 (MKRGIYAVLLVGVLIFSVVASGCIGGTQT) form the signal peptide. The span at 27–65 (TQTQTETQTPEKTQTPTTTQPSPTTTTSPTQTTSQTPTE) shows a compositional bias: low complexity. A disordered region spans residues 27–73 (TQTQTETQTPEKTQTPTTTQPSPTTTTSPTQTTSQTPTETETHTQEA).

The protein belongs to the bacterial solute-binding protein 1 family.

Its function is as follows. Involved in an abc transport system for maltotriose. This Pyrococcus abyssi (strain GE5 / Orsay) protein is Maltotriose-binding protein (malE).